The sequence spans 631 residues: Methanol dehydrogenase [cytochrome c] subunit 1 (631 aa).

An N-terminal signal peptide occupies residues Met1–Ala32. Cys135 and Cys136 form a disulfide bridge. 2 residues coordinate Ca(2+): Glu209 and Asn293. The active-site Proton acceptor is Asp335. A disulfide bridge links Cys418 with Cys447.

The protein belongs to the bacterial PQQ dehydrogenase family. As to quaternary structure, heterotetramer composed of 2 alpha and 2 beta subunits. The cofactor is pyrroloquinoline quinone. Ca(2+) is required as a cofactor.

Its subcellular location is the periplasm. It carries out the reaction 2 Fe(III)-[cytochrome cL] + a primary alcohol = 2 Fe(II)-[cytochrome cL] + an aldehyde + 2 H(+). In terms of biological role, catalyzes the oxidation of primary alcohols including methanol. In Paracoccus denitrificans, this protein is Methanol dehydrogenase [cytochrome c] subunit 1 (moxF).